The chain runs to 126 residues: DNA-directed RNA polymerase subunit omega (126 aa).

The protein belongs to the RNA polymerase subunit omega family. The RNAP catalytic core consists of 2 alpha, 1 beta, 1 beta' and 1 omega subunit. When a sigma factor is associated with the core the holoenzyme is formed, which can initiate transcription.

The catalysed reaction is RNA(n) + a ribonucleoside 5'-triphosphate = RNA(n+1) + diphosphate. Promotes RNA polymerase assembly. Latches the N- and C-terminal regions of the beta' subunit thereby facilitating its interaction with the beta and alpha subunits. In Rickettsia felis (strain ATCC VR-1525 / URRWXCal2) (Rickettsia azadi), this protein is DNA-directed RNA polymerase subunit omega.